Reading from the N-terminus, the 149-residue chain is Inner membrane protein YfeZ (149 aa).

The Cytoplasmic segment spans residues 1-18; the sequence is MKSTEFHPVHYDAHGRLR. The chain crosses the membrane as a helical span at residues 19-39; the sequence is LPLLFWLVLLLQARTWVLFVI. Over 40–58 the chain is Periplasmic; that stretch reads AGASREQGTALLNLFYPDH. Residues 59–79 form a helical membrane-spanning segment; the sequence is DNFWLGLIPGIPAVLAFLLSG. Topologically, residues 80–89 are cytoplasmic; the sequence is RRATFPRTWR. Residues 90 to 110 traverse the membrane as a helical segment; that stretch reads VLYFLLLLAQVVLLCWQPWLW. At 111 to 115 the chain is on the periplasmic side; sequence LNGES. The chain crosses the membrane as a helical span at residues 116 to 136; it reads VSGIGLALVVADIVALIWLLT. Residues 137–149 lie on the Cytoplasmic side of the membrane; it reads NRRLRACFYEVKE.

Its subcellular location is the cell inner membrane. The sequence is that of Inner membrane protein YfeZ (yfeZ) from Escherichia coli (strain K12).